The chain runs to 443 residues: Thymidine phosphorylase (443 aa).

Belongs to the thymidine/pyrimidine-nucleoside phosphorylase family. Homodimer.

The enzyme catalyses thymidine + phosphate = 2-deoxy-alpha-D-ribose 1-phosphate + thymine. It functions in the pathway pyrimidine metabolism; dTMP biosynthesis via salvage pathway; dTMP from thymine: step 1/2. In terms of biological role, the enzymes which catalyze the reversible phosphorolysis of pyrimidine nucleosides are involved in the degradation of these compounds and in their utilization as carbon and energy sources, or in the rescue of pyrimidine bases for nucleotide synthesis. The chain is Thymidine phosphorylase from Shewanella sp. (strain MR-7).